A 479-amino-acid polypeptide reads, in one-letter code: NADH-quinone oxidoreductase subunit N (479 aa).

A run of 14 helical transmembrane segments spans residues 3 to 23 (MLYG…FQLI), 40 to 60 (IGFA…FNGI), 77 to 97 (IIIL…IKVA), 102 to 122 (HSEY…LVSA), 125 to 145 (FMVM…LTTF), 159 to 179 (YFIL…LVYG), 200 to 220 (MAVL…KLSI), 234 to 254 (APLV…LALL), 268 to 288 (FFYI…VGAF), 299 to 319 (FIAY…VANS), 327 to 347 (ISYF…AIII), 373 to 393 (SILI…AGFI), 409 to 429 (ELII…LNIV), and 452 to 472 (LVSI…MLFG).

Belongs to the complex I subunit 2 family. In terms of assembly, NDH-1 is composed of 14 different subunits. Subunits NuoA, H, J, K, L, M, N constitute the membrane sector of the complex.

It localises to the cell inner membrane. It carries out the reaction a quinone + NADH + 5 H(+)(in) = a quinol + NAD(+) + 4 H(+)(out). NDH-1 shuttles electrons from NADH, via FMN and iron-sulfur (Fe-S) centers, to quinones in the respiratory chain. The immediate electron acceptor for the enzyme in this species is believed to be ubiquinone. Couples the redox reaction to proton translocation (for every two electrons transferred, four hydrogen ions are translocated across the cytoplasmic membrane), and thus conserves the redox energy in a proton gradient. This chain is NADH-quinone oxidoreductase subunit N, found in Orientia tsutsugamushi (strain Ikeda) (Rickettsia tsutsugamushi).